We begin with the raw amino-acid sequence, 344 residues long: 4'-phosphopantetheinyl transferase NpgA (344 aa).

This sequence belongs to the P-Pant transferase superfamily.

It catalyses the reaction apo-[ACP] + CoA = holo-[ACP] + adenosine 3',5'-bisphosphate + H(+). In terms of biological role, transfers the 4'-phosphopantetheine moiety from coenzyme A to a Ser of an acyl-carrier-protein. The enzyme is able to transfer the cofactor to a broad range of enzymes with acyl- or peptidyl-carrier protein domains. Required for primary biological processes such as growth and asexual/sexual development, and activates target enzymes involved in the synthesis of metabolites such as fatty acids, polyketides and nonribosomal peptides, lysine, siderophore, penicillin, sterigmatocystin, shamixantone, dehydroaustinol, and pigments. The polypeptide is 4'-phosphopantetheinyl transferase NpgA (npgA) (Emericella nidulans (strain FGSC A4 / ATCC 38163 / CBS 112.46 / NRRL 194 / M139) (Aspergillus nidulans)).